The primary structure comprises 156 residues: Endogenous retrovirus group K member 7 Pro protein (156 aa).

The region spanning phenylalanine 21–leucine 96 is the Peptidase A2 domain. The active site involves aspartate 26. The region spanning tyrosine 111–phenylalanine 156 is the G-patch domain.

It belongs to the peptidase A2 family. HERV class-II K(HML-2) subfamily. Active as a homodimer. Post-translationally, autoproteolytically processed at the N-terminus. Expected C-terminal autoprocessing not detected. The sequence shown is that of the processed Pro protein.

The catalysed reaction is Processing at the authentic HIV-1 PR recognition site and release of the mature p17 matrix and the p24 capsid protein, as a result of the cleavage of the -SQNY-|-PIVQ- cleavage site.. Retroviral proteases have roles in processing of the primary translation products and the maturation of the viral particle. Endogenous Pro proteins may have kept, lost or modified their original function during evolution. This endogenous protein has retained most of the characteristics of retroviral proteases. This is Endogenous retrovirus group K member 7 Pro protein (ERVK-7) from Homo sapiens (Human).